A 431-amino-acid chain; its full sequence is Histidinol dehydrogenase (431 aa).

The NAD(+) site is built by tyrosine 127, glutamine 189, and asparagine 212. The substrate site is built by serine 237, glutamine 259, and histidine 262. Zn(2+)-binding residues include glutamine 259 and histidine 262. Catalysis depends on proton acceptor residues glutamate 326 and histidine 327. Substrate is bound by residues histidine 327, aspartate 360, glutamate 414, and histidine 419. Zn(2+) is bound at residue aspartate 360. A Zn(2+)-binding site is contributed by histidine 419.

This sequence belongs to the histidinol dehydrogenase family. Requires Zn(2+) as cofactor.

The catalysed reaction is L-histidinol + 2 NAD(+) + H2O = L-histidine + 2 NADH + 3 H(+). Its pathway is amino-acid biosynthesis; L-histidine biosynthesis; L-histidine from 5-phospho-alpha-D-ribose 1-diphosphate: step 9/9. In terms of biological role, catalyzes the sequential NAD-dependent oxidations of L-histidinol to L-histidinaldehyde and then to L-histidine. The polypeptide is Histidinol dehydrogenase (Xanthomonas campestris pv. campestris (strain ATCC 33913 / DSM 3586 / NCPPB 528 / LMG 568 / P 25)).